The primary structure comprises 332 residues: Glycerol-3-phosphate dehydrogenase [NAD(P)+] (332 aa).

Tryptophan 11, arginine 30, and lysine 108 together coordinate NADPH. 3 residues coordinate sn-glycerol 3-phosphate: lysine 108, glycine 137, and serine 139. Alanine 141 serves as a coordination point for NADPH. Positions 192, 245, 255, 256, and 257 each coordinate sn-glycerol 3-phosphate. Lysine 192 acts as the Proton acceptor in catalysis. Arginine 256 contacts NADPH. Residues valine 280 and glutamate 282 each contribute to the NADPH site.

This sequence belongs to the NAD-dependent glycerol-3-phosphate dehydrogenase family.

It localises to the cytoplasm. It carries out the reaction sn-glycerol 3-phosphate + NAD(+) = dihydroxyacetone phosphate + NADH + H(+). It catalyses the reaction sn-glycerol 3-phosphate + NADP(+) = dihydroxyacetone phosphate + NADPH + H(+). The protein operates within membrane lipid metabolism; glycerophospholipid metabolism. In terms of biological role, catalyzes the reduction of the glycolytic intermediate dihydroxyacetone phosphate (DHAP) to sn-glycerol 3-phosphate (G3P), the key precursor for phospholipid synthesis. This chain is Glycerol-3-phosphate dehydrogenase [NAD(P)+], found in Burkholderia cenocepacia (strain HI2424).